The chain runs to 251 residues: Fibroblast growth factor 23 (251 aa).

An N-terminal signal peptide occupies residues 1–24 (MLGARLRLWVCALCSVCSMSVLRA). Cysteine 95 and cysteine 113 are joined by a disulfide. Threonine 171 and threonine 178 each carry an O-linked (GalNAc) threonine glycan. The interval 172–221 (PIPRRHTRSAEDDSERDPLNVLKPRARMTPAPASCSQELPSAEDNSPMAS) is disordered. Position 180 is a phosphoserine; by FAM20C (serine 180). A compositionally biased stretch (polar residues) spans 205-219 (SCSQELPSAEDNSPM).

The protein belongs to the heparin-binding growth factors family. Interacts with FGFR1, FGFR2, FGFR3 and FGFR4. Affinity between fibroblast growth factors (FGFs) and their receptors is increased by KL and heparan sulfate glycosaminoglycans that function as coreceptors. Following secretion this protein is inactivated by cleavage into a N-terminal fragment and a C-terminal fragment. The processing is effected by proprotein convertases. In terms of processing, O-glycosylated at Thr-171 and Thr-178 by GALNT3 and glycosylation of Thr-178 requires previous glycosylation at Thr171. Glycosylation is necessary for secretion; it blocks processing by proprotein convertases when the O-glycan is alpha 2,6-sialylated. Competition between proprotein convertase cleavage and block of cleavage by O-glycosylation determines the level of secreted active FGF23. Post-translationally, phosphorylation at Ser-180 mediated by FAM20C slows down glycosylation at Thr-178 notably. As to expression, expressed in osteogenic cells particularly during phases of active bone remodeling. In adult trabecular bone, expressed in osteocytes and flattened bone-lining cells (inactive osteoblasts).

The protein localises to the secreted. Its function is as follows. Regulator of phosphate homeostasis. Inhibits renal tubular phosphate transport by reducing SLC34A1 levels. Up-regulates EGR1 expression in the presence of KL. Acts directly on the parathyroid to decrease PTH secretion. Regulator of vitamin-D metabolism. Negatively regulates osteoblast differentiation and matrix mineralization. The chain is Fibroblast growth factor 23 (FGF23) from Homo sapiens (Human).